The sequence spans 77 residues: MKSKDTLKWFPAQLPEVRIILGDAVVEVAKQGRPINTRTLLDYIEGNIKKTSWLDNKELLQTAISVLKDNQNLNGKM.

To E.coli YdfK.

This is an uncharacterized protein from Escherichia coli (strain K12).